The primary structure comprises 238 residues: MADS-box protein 04g005320 (238 aa).

One can recognise an MADS-box domain in the interval 1–61 (MGRGKVELKR…GKLYEFCSTS (61 aa)). Residues 87–177 (SQNNYQEYMK…KTKLEENSVA (91 aa)) form the K-box domain.

Its subcellular location is the nucleus. In terms of biological role, probable MADS-box transcription factor that functions with J2 and EJ2 in meristem maturation. The polypeptide is MADS-box protein 04g005320 (Solanum lycopersicum (Tomato)).